The sequence spans 357 residues: Probable cinnamyl alcohol dehydrogenase 7/8 (357 aa).

C47 contacts Zn(2+). An NADP(+)-binding site is contributed by S49. Zn(2+)-binding residues include H69, E70, C100, C103, C106, C114, and C163. Residues T167, 188-193 (GLGGVG), 211-216 (SSSDKK), T251, G275, and 298-300 (SFI) contribute to the NADP(+) site.

It belongs to the zinc-containing alcohol dehydrogenase family. In terms of assembly, homodimer. The cofactor is Zn(2+).

The catalysed reaction is (E)-cinnamyl alcohol + NADP(+) = (E)-cinnamaldehyde + NADPH + H(+). It carries out the reaction (E)-coniferol + NADP(+) = (E)-coniferaldehyde + NADPH + H(+). It catalyses the reaction (E)-sinapyl alcohol + NADP(+) = (E)-sinapaldehyde + NADPH + H(+). The enzyme catalyses (E)-4-coumaroyl alcohol + NADP(+) = (E)-4-coumaraldehyde + NADPH + H(+). The catalysed reaction is (E)-caffeyl alcohol + NADP(+) = (E)-caffeyl aldehyde + NADPH + H(+). It functions in the pathway aromatic compound metabolism; phenylpropanoid biosynthesis. In terms of biological role, involved in lignin biosynthesis. Catalyzes the final step specific for the production of lignin monomers. Catalyzes the NADPH-dependent reduction of coniferaldehyde, 5-hydroxyconiferaldehyde, sinapaldehyde, 4-coumaraldehyde and caffeyl aldehyde to their respective alcohols. The chain is Probable cinnamyl alcohol dehydrogenase 7/8 (CAD7) from Picea abies (Norway spruce).